The chain runs to 188 residues: dCTP deaminase (188 aa).

DCTP is bound by residues 111–116, 135–137, Gln-156, Tyr-170, and Gln-180; these read KSTYAR and TLE. Glu-137 serves as the catalytic Proton donor/acceptor.

The protein belongs to the dCTP deaminase family. Homotrimer.

The enzyme catalyses dCTP + H2O + H(+) = dUTP + NH4(+). It participates in pyrimidine metabolism; dUMP biosynthesis; dUMP from dCTP (dUTP route): step 1/2. Functionally, catalyzes the deamination of dCTP to dUTP. This is dCTP deaminase from Dechloromonas aromatica (strain RCB).